The following is a 2896-amino-acid chain: Hemocyanin G-type, units Oda to Odg (2896 aa).

The functional unit Oda stretch occupies residues 1-419; that stretch reads NLIRKDVDAL…ADMVVVDKTG (419 aa). Residue His-41 participates in Cu cation binding. An intrachain disulfide couples Cys-47 to Cys-57. Residues 58 to 60 constitute a cross-link (2'-(S-cysteinyl)-histidine (Cys-His)); it reads CLH. 5 residues coordinate Cu cation: His-60, His-69, His-178, His-182, and His-209. Disulfide bonds link Cys-168–Cys-234 and Cys-321–Cys-333. A glycan (N-linked (GlcNAc...) asparagine) is linked at Asn-386. The interval 420-834 is functional unit Odb; that stretch reads LNVRKDLQSL…KESGVVFDEL (415 aa). His-460 contributes to the Cu cation binding site. Cysteines 466 and 477 form a disulfide. A cross-link (2'-(S-cysteinyl)-histidine (Cys-His)) is located at residues 478 to 480; the sequence is CVH. The Cu cation site is built by His-480, His-489, His-601, His-605, and His-632. Cys-591 and Cys-657 are oxidised to a cystine. Asn-804 carries an N-linked (GlcNAc...) asparagine glycan. A functional unit Odc region spans residues 835-1254; sequence YRSRRDVSSL…GIWVEPVTSA (420 aa). Residue His-875 coordinates Cu cation. The cysteines at positions 881 and 892 are disulfide-linked. The segment at residues 893 to 895 is a cross-link (2'-(S-cysteinyl)-histidine (Cys-His)); it reads CHH. Residues His-895, His-904, His-1013, His-1017, His-1044, and His-1292 each coordinate Cu cation. Cysteines 1003 and 1070 form a disulfide. The tract at residues 1255-1667 is functional unit Odd; that stretch reads NRIRKNLNAL…ADIKSEEGNE (413 aa). The cysteines at positions 1298 and 1309 are disulfide-linked. Positions 1310–1312 form a cross-link, 2'-(S-cysteinyl)-histidine (Cys-His); the sequence is CIH. Residues His-1312, His-1321, His-1425, His-1429, and His-1456 each coordinate Cu cation. An intrachain disulfide couples Cys-1415 to Cys-1482. Asn-1496 carries an N-linked (GlcNAc...) asparagine glycan. An intrachain disulfide couples Cys-1571 to Cys-1581. The N-linked (GlcNAc...) asparagine glycan is linked to Asn-1634. The segment at 1668-2085 is functional unit Ode; the sequence is YLVRKNVERL…NEDADIDTPL (418 aa). Residue His-1708 coordinates Cu cation. Cys-1714 and Cys-1725 are oxidised to a cystine. The 2'-(S-cysteinyl)-histidine (Cys-His) cross-link spans 1726–1728; that stretch reads CLH. Residues His-1728, His-1737, His-1849, His-1853, and His-1880 each contribute to the Cu cation site. 2 disulfide bridges follow: Cys-1839-Cys-1906 and Cys-1997-Cys-2003. Asn-2055 is a glycosylation site (N-linked (GlcNAc...) asparagine). A functional unit Odf region spans residues 2086-2502; it reads NHIRRNVESL…REVHKKTVGD (417 aa). His-2126 is a Cu cation binding site. Cys-2131 and Cys-2141 are joined by a disulfide. The segment at residues 2142-2144 is a cross-link (2'-(S-cysteinyl)-histidine (Cys-His)); the sequence is CLH. 2 residues coordinate Cu cation: His-2144 and His-2153. N-linked (GlcNAc...) asparagine glycosylation occurs at Asn-2201. 2 cysteine pairs are disulfide-bonded: Cys-2252–Cys-2319 and Cys-2406–Cys-2411. Cu cation contacts are provided by His-2262, His-2266, and His-2293. A functional unit Odg region spans residues 2503-2896; sequence AIIRKNVNSL…VFLAPAKTTH (394 aa). A Cu cation-binding site is contributed by His-2543. A disulfide bridge connects residues Cys-2549 and Cys-2559. Asn-2553 carries N-linked (GlcNAc...) asparagine glycosylation. The segment at residues 2560–2562 is a cross-link (2'-(S-cysteinyl)-histidine (Cys-His)); sequence CQH. Cu cation is bound by residues His-2562, His-2571, His-2671, His-2675, and His-2702. 2 cysteine pairs are disulfide-bonded: Cys-2661–Cys-2728 and Cys-2815–Cys-2821.

It belongs to the tyrosinase family. Hemocyanin subfamily. In terms of assembly, decamers of large identical subunits (350 kDa), each containing 7 globular oxygen-binding functional units: ODA, ODB, ODC, ODD, ODE, ODF, and ODG. Decamer formation requires the presence of magnesium ions. Cu(2+) serves as cofactor.

Functionally, hemocyanins are copper-containing oxygen carriers occurring freely dissolved in the hemolymph of many mollusks and arthropods. The protein is Hemocyanin G-type, units Oda to Odg (ODHCY) of Enteroctopus dofleini (North Pacific giant octopus).